A 288-amino-acid chain; its full sequence is MNNIIDGKALANEILADLKLEIQELKDKTNTSPKLAIVLVGNNPASIIYVKHKIKNAHNIGIDTLLVNLSTNIHTDDLILKINELNLNNEISGIIVQLPLPRSIDTNKILSAVLPLKDIDGFHPLNVGYLHSGISQGFIPCTALGCLAVIKKYETNLSGKNVVIIGRSNIVGKPLSALLLKEHCSVTICHSKSQNLSKISSKADIVIAAIGSPVKLTAEYFNPESIVIDVGINRINGNKIIGDVDFENVKSKVKYITPVPGGIGPMTIAFLLNNTVKAFKDSYSTVCH.

Residues 166 to 168 (GRS), Ser-191, and Ile-232 contribute to the NADP(+) site.

The protein belongs to the tetrahydrofolate dehydrogenase/cyclohydrolase family. In terms of assembly, homodimer.

It catalyses the reaction (6R)-5,10-methylene-5,6,7,8-tetrahydrofolate + NADP(+) = (6R)-5,10-methenyltetrahydrofolate + NADPH. It carries out the reaction (6R)-5,10-methenyltetrahydrofolate + H2O = (6R)-10-formyltetrahydrofolate + H(+). Its pathway is one-carbon metabolism; tetrahydrofolate interconversion. In terms of biological role, catalyzes the oxidation of 5,10-methylenetetrahydrofolate to 5,10-methenyltetrahydrofolate and then the hydrolysis of 5,10-methenyltetrahydrofolate to 10-formyltetrahydrofolate. This chain is Bifunctional protein FolD, found in Rickettsia canadensis (strain McKiel).